The chain runs to 124 residues: Multifunctional methyltransferase subunit TRM112 homolog B (124 aa).

Residues 2–120 form the TRM112 domain; that stretch reads RLIVHNMLSC…SKGIPNMLLH (119 aa).

Belongs to the TRM112 family. Interacts with TRM9. In terms of tissue distribution, expressed in anthers.

In terms of biological role, acts as an activator of both rRNA/tRNA and protein methyltransferases. Required for TRM9 tRNA methyltransferase activity. This chain is Multifunctional methyltransferase subunit TRM112 homolog B, found in Arabidopsis thaliana (Mouse-ear cress).